The chain runs to 101 residues: MPTVAYTRGGAEYTPVYLMKIDEQKCIGCGRCFKVCGRDVMSLHGLTEDGQVVAPGTDEWDEVEDEIVKKVMALTGAENCIGCGACARVCPSECQTHAALS.

2 consecutive 4Fe-4S ferredoxin-type domains span residues 17-46 (YLMK…LHGL) and 70-100 (KVMA…HAAL). Cys-26, Cys-29, Cys-32, Cys-36, Cys-80, Cys-83, Cys-86, and Cys-90 together coordinate [4Fe-4S] cluster.

In terms of assembly, homodimer. It depends on [4Fe-4S] cluster as a cofactor.

Ferredoxins are iron-sulfur proteins that transfer electrons in a wide variety of metabolic reactions. This chain is Ferredoxin-3 (fdxB), found in Rhodobacter capsulatus (Rhodopseudomonas capsulata).